Consider the following 412-residue polypeptide: Serine hydroxymethyltransferase (412 aa).

(6S)-5,6,7,8-tetrahydrofolate contacts are provided by residues L120 and 124–126; that span reads GHL. Position 229 is an N6-(pyridoxal phosphate)lysine (K229). Residue 352-354 coordinates (6S)-5,6,7,8-tetrahydrofolate; sequence SPF.

This sequence belongs to the SHMT family. Homodimer. Requires pyridoxal 5'-phosphate as cofactor.

It localises to the cytoplasm. It catalyses the reaction (6R)-5,10-methylene-5,6,7,8-tetrahydrofolate + glycine + H2O = (6S)-5,6,7,8-tetrahydrofolate + L-serine. It functions in the pathway one-carbon metabolism; tetrahydrofolate interconversion. The protein operates within amino-acid biosynthesis; glycine biosynthesis; glycine from L-serine: step 1/1. Functionally, catalyzes the reversible interconversion of serine and glycine with tetrahydrofolate (THF) serving as the one-carbon carrier. This reaction serves as the major source of one-carbon groups required for the biosynthesis of purines, thymidylate, methionine, and other important biomolecules. Also exhibits THF-independent aldolase activity toward beta-hydroxyamino acids, producing glycine and aldehydes, via a retro-aldol mechanism. The polypeptide is Serine hydroxymethyltransferase (Acetivibrio thermocellus (strain ATCC 27405 / DSM 1237 / JCM 9322 / NBRC 103400 / NCIMB 10682 / NRRL B-4536 / VPI 7372) (Clostridium thermocellum)).